The chain runs to 403 residues: O-succinylhomoserine sulfhydrylase (403 aa).

Lys-219 is modified (N6-(pyridoxal phosphate)lysine).

Belongs to the trans-sulfuration enzymes family. MetZ subfamily. As to quaternary structure, homotetramer. Requires pyridoxal 5'-phosphate as cofactor.

It carries out the reaction O-succinyl-L-homoserine + hydrogen sulfide = L-homocysteine + succinate. It participates in amino-acid biosynthesis; L-methionine biosynthesis via de novo pathway; L-homocysteine from O-succinyl-L-homoserine: step 1/1. In terms of biological role, catalyzes the formation of L-homocysteine from O-succinyl-L-homoserine (OSHS) and hydrogen sulfide. Cannot use the other activated form of L-homoserine, O-acetyl-L-homoserine, as a substrate. This chain is O-succinylhomoserine sulfhydrylase, found in Pseudomonas aeruginosa (strain ATCC 15692 / DSM 22644 / CIP 104116 / JCM 14847 / LMG 12228 / 1C / PRS 101 / PAO1).